Consider the following 366-residue polypeptide: MASSLRAAISKIKRDDVGQQVCPNYVMLRSSVTTKVVRNVVEYQIRTGGFFSCLAMLRPLQYAKRERLLGQRNLERISTRDILQTRDLHSLCMPTPDAPMSNHQAATMRELICSYFKVDHTDGLKYIPMDERYSPSSLARLFTMGMAGLHITTEPSYKRVPIMHLAADLDCMTLALPYMITLDGDTVVPVAPTLSAEQLLDDGLKGLACMDISYGCEVDASNRSAGDQSMDSSRCINELYCEETAEAICVLKTCLVLNCMQFKLEMDDLAHNATELDKIQMMIPFSERVFRMASSFATIDAQCFRFCVMMKDKNLKIDMRETMRLWTRSALDDSVVTSSLSISLDRGRWVAADATDARLLVFPIRV.

The important for ssRNA-binding and formation of complexes stretch occupies residues 1-11 (MASSLRAAISK).

Belongs to the orthoreovirus sigma-NS protein family. In terms of assembly, homooligomer; in presence of RNA. Interacts with protein mu-NS; this interaction allows the localization of sigma-NS to the viral factories. Interacts with host G3BP1 (via C-terminus); this interaction induces the relocalization of G3BP1 and other SG proteins to the viral factories periphery.

The protein localises to the host cytoplasm. In terms of biological role, protein that binds to ssRNA and participates with protein mu-NS in forming the matrix of viral factories, which are large inclusions in the host cytoplasm where replication intermediates are assembled and viral RNA replication takes place. Plays a role in the inhibition of the integrated stress response (ISR) to escape from host cell translational shutoff. Participates in the disruption of stress granules (SG) through its association with host G3BP1 and mu-NS. The protein is Protein sigma-NS (S3) of Mammalia (T1L).